Here is a 166-residue protein sequence, read N- to C-terminus: MPEFLDIRPLTSAAFAAFGEVIEADPASMRLINGGTTERFHALAAAEAAGEGARVIINLFRGQPRNFPYDVDMMERHPFGSQSFSPVSGRPFLVVVSEDESGRPGRPQVFLARGDQGVNYRRNVWHHPLMALGEVSDFLVVDRDGAGNNLEEFFFETPYIIKEPAL.

It belongs to the ureidoglycolate lyase family. Homodimer. Ni(2+) serves as cofactor.

The catalysed reaction is (S)-ureidoglycolate = urea + glyoxylate. The protein operates within nitrogen metabolism; (S)-allantoin degradation. Its function is as follows. Catalyzes the catabolism of the allantoin degradation intermediate (S)-ureidoglycolate, generating urea and glyoxylate. Involved in the utilization of allantoin as nitrogen source. This chain is Ureidoglycolate lyase, found in Rhizobium leguminosarum bv. trifolii (strain WSM2304).